Here is a 110-residue protein sequence, read N- to C-terminus: Nucleoid-associated protein KPK_4227 (110 aa).

The interval 1-22 (MFGGKGGLGNLMKQAQQMQDKM) is disordered.

It belongs to the YbaB/EbfC family. In terms of assembly, homodimer.

It is found in the cytoplasm. Its subcellular location is the nucleoid. Its function is as follows. Binds to DNA and alters its conformation. May be involved in regulation of gene expression, nucleoid organization and DNA protection. This chain is Nucleoid-associated protein KPK_4227, found in Klebsiella pneumoniae (strain 342).